Here is an 810-residue protein sequence, read N- to C-terminus: Exocyst complex component 6B (810 aa).

Positions Thr-79–Gln-118 form a coiled coil. The segment at Glu-258–Val-282 is disordered. Acidic residues predominate over residues Asp-272 to Val-282.

The protein belongs to the SEC15 family. The exocyst complex is composed of SEC3, SEC5, SEC6, SEC8, SEC10, SEC15, EXO70 and EXO84.

In terms of biological role, component of the exocyst complex involved in the docking of exocytic vesicles with fusion sites on the plasma membrane. The protein is Exocyst complex component 6B (Exoc6b) of Mus musculus (Mouse).